A 28-amino-acid chain; its full sequence is uncharacterized protein (28 aa).

This is an uncharacterized protein from Saccharomyces cerevisiae (strain ATCC 204508 / S288c) (Baker's yeast).